A 265-amino-acid chain; its full sequence is Undecaprenyl-diphosphatase (265 aa).

A run of 7 helical transmembrane segments spans residues 42–62, 82–102, 108–128, 143–163, 181–201, 221–241, and 248–264; these read AATFEVAIQLGAILAVVVLYW, GIMLLLLTSLPASVLGLAAHS, LFTPSTVAIALAVGAIFMLLV, MSPALALGIGCFQCLALWPGF, GLAAEYSFIAAVPIMFAATGY, GFVVSFLSAWAAVKLFIALVG, and FAWYRLAIAPLVYYFMA.

Belongs to the UppP family.

It is found in the cell inner membrane. It catalyses the reaction di-trans,octa-cis-undecaprenyl diphosphate + H2O = di-trans,octa-cis-undecaprenyl phosphate + phosphate + H(+). Catalyzes the dephosphorylation of undecaprenyl diphosphate (UPP). Confers resistance to bacitracin. The polypeptide is Undecaprenyl-diphosphatase (Nitratidesulfovibrio vulgaris (strain DP4) (Desulfovibrio vulgaris)).